The primary structure comprises 451 residues: Tubby-like F-box protein 12 (451 aa).

Residues 57 to 112 enclose the F-box domain; the sequence is SRWVGLPPELLRDVMKRLEEGESNWPSRKDVVACAAVCRTWREICKDIVQSPEICG. The segment covering 387–406 has biased composition (low complexity); the sequence is LEQQQQQQQQNHASSSSSAS. The disordered stretch occupies residues 387 to 407; sequence LEQQQQQQQQNHASSSSSASD.

Belongs to the TUB family. As to expression, ubiquitous.

This Oryza sativa subsp. japonica (Rice) protein is Tubby-like F-box protein 12 (TULP12).